The chain runs to 412 residues: MAKIQKIKGVADLFPEDSARYAFMEKTARDVFSSYGYGELRVPILEKTELFCRSIGEETDVVQKEMYTFPDRKGRSLTMRPEATAGIVRAYVENKIYQPGKVSKFFTFGPMFRYERPQAGRMRQFHQIDAEIFGAAEPQADAEVLLMLSSFLSNIGLEKLSFELNSLGCPECRPKYNQALKDFLASLDREQLCDDCQRRMDTNPLRVLDCKSKNCKALTENAPTLPDHLCGECREHFDTVIALIDEAGLQYTLNPRLVRGLDYYQRTAFEVTSGDIGAQTAVAGGGRYDGLVESLGGPKKVPAIGFACGMERLAMLLEGEFEPAADFYVALVDERAAKDSLIFGEKLRRSGLKGEVGFTAKSMKAQLRHANKINAQKCFIFGAEEFENGTVTIKDMAEGGEQETVSRDEYFK.

Belongs to the class-II aminoacyl-tRNA synthetase family. In terms of assembly, homodimer.

It localises to the cytoplasm. It carries out the reaction tRNA(His) + L-histidine + ATP = L-histidyl-tRNA(His) + AMP + diphosphate + H(+). The chain is Histidine--tRNA ligase from Maridesulfovibrio salexigens (strain ATCC 14822 / DSM 2638 / NCIMB 8403 / VKM B-1763) (Desulfovibrio salexigens).